The primary structure comprises 393 residues: NAD(P)H-quinone oxidoreductase subunit H, chloroplastic (393 aa).

The protein belongs to the complex I 49 kDa subunit family. In terms of assembly, NDH is composed of at least 16 different subunits, 5 of which are encoded in the nucleus.

Its subcellular location is the plastid. The protein resides in the chloroplast thylakoid membrane. The catalysed reaction is a plastoquinone + NADH + (n+1) H(+)(in) = a plastoquinol + NAD(+) + n H(+)(out). The enzyme catalyses a plastoquinone + NADPH + (n+1) H(+)(in) = a plastoquinol + NADP(+) + n H(+)(out). In terms of biological role, NDH shuttles electrons from NAD(P)H:plastoquinone, via FMN and iron-sulfur (Fe-S) centers, to quinones in the photosynthetic chain and possibly in a chloroplast respiratory chain. The immediate electron acceptor for the enzyme in this species is believed to be plastoquinone. Couples the redox reaction to proton translocation, and thus conserves the redox energy in a proton gradient. The chain is NAD(P)H-quinone oxidoreductase subunit H, chloroplastic from Oenothera argillicola (Appalachian evening primrose).